The following is a 265-amino-acid chain: uncharacterized protein (265 aa).

Residues 1–21 form a helical membrane-spanning segment; sequence MAFNNSTIIIIIVIAFAFFLI. Residues Asn-74 and Asn-142 are each glycosylated (N-linked (GlcNAc...) asparagine; by host).

The protein localises to the host membrane. Its subcellular location is the virion. This is an uncharacterized protein from Acanthamoeba polyphaga mimivirus (APMV).